Here is a 194-residue protein sequence, read N- to C-terminus: Small ribosomal subunit protein eS7 (194 aa).

The protein belongs to the eukaryotic ribosomal protein eS7 family.

This is Small ribosomal subunit protein eS7 (RpS7) from Drosophila yakuba (Fruit fly).